The primary structure comprises 155 residues: MRCPYCGHEDSQVKDSRPTEDGAAIRRRRQCEDCGARFTTFERIQLREVVVIKAGGTREPFDREKLMRSVQIACRKRPIDGARIERLVSGIQRQLETSGENEVQASQIGAMVMEALKGFDNVAYIRFASVYRDFTEARDFEEFASTITEAARPIK.

Residues 1 to 24 form a disordered region; that stretch reads MRCPYCGHEDSQVKDSRPTEDGAA. The segment at 3–34 is a zinc-finger region; the sequence is CPYCGHEDSQVKDSRPTEDGAAIRRRRQCEDC. Over residues 7–24 the composition is skewed to basic and acidic residues; that stretch reads GHEDSQVKDSRPTEDGAA. Positions 49–139 constitute an ATP-cone domain; sequence VVVIKAGGTR…VYRDFTEARD (91 aa).

This sequence belongs to the NrdR family. It depends on Zn(2+) as a cofactor.

Its function is as follows. Negatively regulates transcription of bacterial ribonucleotide reductase nrd genes and operons by binding to NrdR-boxes. This Sphingopyxis alaskensis (strain DSM 13593 / LMG 18877 / RB2256) (Sphingomonas alaskensis) protein is Transcriptional repressor NrdR.